Here is a 423-residue protein sequence, read N- to C-terminus: Large ribosomal subunit protein mL37 (423 aa).

Residues Met1–Gly29 constitute a mitochondrion transit peptide.

It belongs to the mitochondrion-specific ribosomal protein mL37 family. As to quaternary structure, component of the mitochondrial ribosome large subunit (39S) which comprises a 16S rRNA and about 50 distinct proteins.

The protein localises to the mitochondrion. The polypeptide is Large ribosomal subunit protein mL37 (Mrpl37) (Mus musculus (Mouse)).